A 546-amino-acid chain; its full sequence is Chaperonin GroEL 2 (546 aa).

Residues 30-33, lysine 51, 87-91, glycine 415, 479-481, and aspartate 495 each bind ATP; these read TLGP, DGTTT, and NAA. The interval 526–546 is disordered; sequence KEDAPMPGGMPGGMGGMGMDM. Residues 534–546 show a composition bias toward gly residues; the sequence is GMPGGMGGMGMDM.

It belongs to the chaperonin (HSP60) family. Forms a cylinder of 14 subunits composed of two heptameric rings stacked back-to-back. Interacts with the co-chaperonin GroES.

The protein resides in the cytoplasm. The enzyme catalyses ATP + H2O + a folded polypeptide = ADP + phosphate + an unfolded polypeptide.. Its function is as follows. Together with its co-chaperonin GroES, plays an essential role in assisting protein folding. The GroEL-GroES system forms a nano-cage that allows encapsulation of the non-native substrate proteins and provides a physical environment optimized to promote and accelerate protein folding. The sequence is that of Chaperonin GroEL 2 from Burkholderia lata (strain ATCC 17760 / DSM 23089 / LMG 22485 / NCIMB 9086 / R18194 / 383).